The sequence spans 422 residues: UDP-N-acetylglucosamine 1-carboxyvinyltransferase (422 aa).

Phosphoenolpyruvate is bound at residue 22 to 23 (KN). Arginine 93 contributes to the UDP-N-acetyl-alpha-D-glucosamine binding site. Cysteine 117 (proton donor) is an active-site residue. At cysteine 117 the chain carries 2-(S-cysteinyl)pyruvic acid O-phosphothioketal. Residues 122 to 126 (RPVDQ), aspartate 305, and isoleucine 327 each bind UDP-N-acetyl-alpha-D-glucosamine.

This sequence belongs to the EPSP synthase family. MurA subfamily.

The protein localises to the cytoplasm. The catalysed reaction is phosphoenolpyruvate + UDP-N-acetyl-alpha-D-glucosamine = UDP-N-acetyl-3-O-(1-carboxyvinyl)-alpha-D-glucosamine + phosphate. It functions in the pathway cell wall biogenesis; peptidoglycan biosynthesis. Functionally, cell wall formation. Adds enolpyruvyl to UDP-N-acetylglucosamine. The sequence is that of UDP-N-acetylglucosamine 1-carboxyvinyltransferase from Bordetella bronchiseptica (strain ATCC BAA-588 / NCTC 13252 / RB50) (Alcaligenes bronchisepticus).